Here is a 533-residue protein sequence, read N- to C-terminus: (E)-beta-farnesene synthase (533 aa).

Residues Asp286, Asp290, Asn430, Ser434, and Glu438 each contribute to the Mg(2+) site. The DDXXD motif signature appears at 286–290; it reads DDMMD.

Belongs to the terpene synthase family. The cofactor is Mg(2+). Co(2+) serves as cofactor. Requires Mn(2+) as cofactor.

The protein resides in the cytoplasm. It carries out the reaction (2E,6E)-farnesyl diphosphate = (E)-beta-farnesene + diphosphate. It functions in the pathway secondary metabolite biosynthesis; terpenoid biosynthesis. Sesquiterpene cyclase catalyzing the production of sixfold more beta-farnesene than alpha-bergamotene from farnesyl diphosphate. Involved in indirect defense by producing volatile signals attracting natural enemies of herbivores. This chain is (E)-beta-farnesene synthase, found in Zea diploperennis (Diploperennial teosinte).